The chain runs to 301 residues: Leucine-rich repeat-containing protein 30 (301 aa).

9 LRR repeats span residues 72–93 (EVQK…VGKL), 95–116 (RIVV…VSLL), 118–139 (CLKV…LSLC), 141–163 (KLEV…ADLS), 164–185 (RLRK…VFSL), 187–208 (ELIF…IQHL), 210–231 (SLQI…LCLV), 233–254 (SLEL…LHLL), and 265–287 (MDKG…VEGG).

The polypeptide is Leucine-rich repeat-containing protein 30 (LRRC30) (Homo sapiens (Human)).